Here is a 118-residue protein sequence, read N- to C-terminus: uncharacterized protein (118 aa).

It belongs to the HesB/IscA family. Ycf83 subfamily.

This is an uncharacterized protein from Synechocystis sp. (strain ATCC 27184 / PCC 6803 / Kazusa).